A 60-amino-acid chain; its full sequence is Cecropin-B1 (60 aa).

The first 24 residues, 1-24 (MNFSKVFALVLLIGLVLLTGHTEA), serve as a signal peptide directing secretion.

The protein belongs to the cecropin family.

The protein resides in the secreted. In terms of biological role, putative antimicrobial peptide. Partially neutralizes lipopolysaccharides (LPS). Exhibits anti-inflammatory properties: inhibits LPS-induced iNOS/NOS2 transcription, nitric oxide (NO) and pro-inflammatory cytokine production in mouse macrophages and human peripheral blood mononuclear cells (PBMCs); inhibits LPS-induced activation of MAPK and NF-kappa-B signaling pathways in mouse macrophages. This Aedes aegypti (Yellowfever mosquito) protein is Cecropin-B1.